The following is a 103-amino-acid chain: Phosphoribosyl-ATP pyrophosphatase (103 aa).

The tract at residues Leu84–Leu103 is disordered.

Belongs to the PRA-PH family.

Its subcellular location is the cytoplasm. The catalysed reaction is 1-(5-phospho-beta-D-ribosyl)-ATP + H2O = 1-(5-phospho-beta-D-ribosyl)-5'-AMP + diphosphate + H(+). It participates in amino-acid biosynthesis; L-histidine biosynthesis; L-histidine from 5-phospho-alpha-D-ribose 1-diphosphate: step 2/9. This chain is Phosphoribosyl-ATP pyrophosphatase (hisE), found in Listeria innocua serovar 6a (strain ATCC BAA-680 / CLIP 11262).